A 521-amino-acid polypeptide reads, in one-letter code: Bifunctional dihydrofolate reductase-thymidylate synthase (521 aa).

Positions 17–194 constitute a DHFR domain; it reads NYQVVVAGTR…IRHSFVSFVR (178 aa). V21 lines the substrate pocket. Residues A23 and 29–35 contribute to the NADP(+) site; that span reads GIGKDGV. D43 contacts substrate. Residues 67–69 and 88–91 each bind NADP(+); these read RKT and LTRS. I130 contacts substrate. 131-138 contributes to the NADP(+) binding site; it reads GGGQVLRE. T151 provides a ligand contact to substrate. A thymidylate synthase region spans residues 197–521; that stretch reads KSVAETHESN…HQKIEMKMAV (325 aa). R258 provides a ligand contact to dUMP. C403 is a catalytic residue. DUMP contacts are provided by residues H404, 422-426, N434, and 464-466; these read QRSAD and HVY.

The protein in the N-terminal section; belongs to the dihydrofolate reductase family. It in the C-terminal section; belongs to the thymidylate synthase family.

The catalysed reaction is (6S)-5,6,7,8-tetrahydrofolate + NADP(+) = 7,8-dihydrofolate + NADPH + H(+). The enzyme catalyses dUMP + (6R)-5,10-methylene-5,6,7,8-tetrahydrofolate = 7,8-dihydrofolate + dTMP. It functions in the pathway cofactor biosynthesis; tetrahydrofolate biosynthesis; 5,6,7,8-tetrahydrofolate from 7,8-dihydrofolate: step 1/1. Functionally, bifunctional enzyme. Involved in de novo dTMP biosynthesis. Key enzyme in folate metabolism. Can play two different roles depending on the source of dihydrofolate: de novo synthesis of tetrahydrofolate or recycling of the dihydrofolate released as one of the end products of the TS catalyzed reaction. Catalyzes an essential reaction for de novo glycine and purine synthesis, DNA precursor synthesis, and for the conversion of dUMP to dTMP. The polypeptide is Bifunctional dihydrofolate reductase-thymidylate synthase (DRTS) (Zea mays (Maize)).